Consider the following 201-residue polypeptide: Probable molybdenum cofactor guanylyltransferase (201 aa).

Residues 16 to 18 (LAG), lysine 28, aspartate 75, and aspartate 107 contribute to the GTP site. Residue aspartate 107 coordinates Mg(2+).

Belongs to the MobA family. The cofactor is Mg(2+).

It is found in the cytoplasm. The catalysed reaction is Mo-molybdopterin + GTP + H(+) = Mo-molybdopterin guanine dinucleotide + diphosphate. Functionally, transfers a GMP moiety from GTP to Mo-molybdopterin (Mo-MPT) cofactor (Moco or molybdenum cofactor) to form Mo-molybdopterin guanine dinucleotide (Mo-MGD) cofactor. In Mycobacterium marinum (strain ATCC BAA-535 / M), this protein is Probable molybdenum cofactor guanylyltransferase.